The following is a 138-amino-acid chain: ATP synthase epsilon chain (138 aa).

Belongs to the ATPase epsilon chain family. F-type ATPases have 2 components, CF(1) - the catalytic core - and CF(0) - the membrane proton channel. CF(1) has five subunits: alpha(3), beta(3), gamma(1), delta(1), epsilon(1). CF(0) has three main subunits: a, b and c.

The protein localises to the cell membrane. In terms of biological role, produces ATP from ADP in the presence of a proton gradient across the membrane. The polypeptide is ATP synthase epsilon chain (Streptococcus equi subsp. equi (strain 4047)).